The following is a 77-amino-acid chain: U8-lycotoxin-Ls1v (77 aa).

The first 20 residues, 1–20 (MKLIIFTGLVLFGIVSLIEA), serve as a signal peptide directing secretion. The propeptide occupies 21 to 26 (QAENEK).

It belongs to the neurotoxin 19 (CSTX) family. 08 (U8-Lctx) subfamily. In terms of processing, contains 4 disulfide bonds. Expressed by the venom gland.

The protein resides in the secreted. This chain is U8-lycotoxin-Ls1v, found in Lycosa singoriensis (Wolf spider).